A 384-amino-acid polypeptide reads, in one-letter code: Bifunctional enzyme IspD/IspF (384 aa).

The tract at residues 1-226 is 2-C-methyl-D-erythritol 4-phosphate cytidylyltransferase; it reads MAKTVVLVVA…RCLFDGPGEV (226 aa). Positions 227–384 are 2-C-methyl-D-erythritol 2,4-cyclodiphosphate synthase; sequence RSASGYDVHR…QAMASVWLPR (158 aa). The a divalent metal cation site is built by aspartate 233 and histidine 235. 4-CDP-2-C-methyl-D-erythritol 2-phosphate is bound by residues 233-235 and 260-261; these read DVH and HS. Position 268 (histidine 268) interacts with a divalent metal cation. Residues 282–284, 358–361, phenylalanine 365, and arginine 368 contribute to the 4-CDP-2-C-methyl-D-erythritol 2-phosphate site; these read DIG and TTTE.

It in the N-terminal section; belongs to the IspD/TarI cytidylyltransferase family. IspD subfamily. This sequence in the C-terminal section; belongs to the IspF family. The cofactor is a divalent metal cation.

The catalysed reaction is 2-C-methyl-D-erythritol 4-phosphate + CTP + H(+) = 4-CDP-2-C-methyl-D-erythritol + diphosphate. The enzyme catalyses 4-CDP-2-C-methyl-D-erythritol 2-phosphate = 2-C-methyl-D-erythritol 2,4-cyclic diphosphate + CMP. Its pathway is isoprenoid biosynthesis; isopentenyl diphosphate biosynthesis via DXP pathway; isopentenyl diphosphate from 1-deoxy-D-xylulose 5-phosphate: step 2/6. It participates in isoprenoid biosynthesis; isopentenyl diphosphate biosynthesis via DXP pathway; isopentenyl diphosphate from 1-deoxy-D-xylulose 5-phosphate: step 4/6. In terms of biological role, bifunctional enzyme that catalyzes the formation of 4-diphosphocytidyl-2-C-methyl-D-erythritol from CTP and 2-C-methyl-D-erythritol 4-phosphate (MEP) (IspD), and catalyzes the conversion of 4-diphosphocytidyl-2-C-methyl-D-erythritol 2-phosphate (CDP-ME2P) to 2-C-methyl-D-erythritol 2,4-cyclodiphosphate (ME-CPP) with a corresponding release of cytidine 5-monophosphate (CMP) (IspF). The sequence is that of Bifunctional enzyme IspD/IspF from Paramagnetospirillum magneticum (strain ATCC 700264 / AMB-1) (Magnetospirillum magneticum).